A 694-amino-acid chain; its full sequence is Transcription activator of gluconeogenesis Pc22g08580 (694 aa).

The tract at residues 1–61 is disordered; that stretch reads MNMETKNGSP…DPSRPRRKKA (61 aa). A compositionally biased stretch (basic and acidic residues) spans 17–55; it reads SGERDSADITEHEQMDVKPKTNGDSKADRKAANAKDPSR. Residues 65–93 constitute a DNA-binding region (zn(2)-C6 fungal-type); it reads CFACQRAHLTCGDERPCQRCIKRGLQDAC. Disordered regions lie at residues 126–240, 276–300, and 552–582; these read TLRN…GPFF, AAGD…AQFS, and TGGS…GTGR. Over residues 132–141 the composition is skewed to polar residues; it reads PISRNGTNAV. A compositionally biased stretch (low complexity) spans 142 to 171; sequence NSNQQHSQQHPQQPTNPTNNNFYPTPQTQT. Polar residues-rich tracts occupy residues 172 to 234, 281 to 300, and 552 to 581; these read GSYN…SQNP, PTDS…AQFS, and TGGS…SGTG.

It belongs to the ERT1/acuK family.

It is found in the nucleus. Transcription factor which regulates nonfermentable carbon utilization. Activator of gluconeogenetic genes. In Penicillium rubens (strain ATCC 28089 / DSM 1075 / NRRL 1951 / Wisconsin 54-1255) (Penicillium chrysogenum), this protein is Transcription activator of gluconeogenesis Pc22g08580.